The primary structure comprises 633 residues: Probable potassium transport system protein Kup 2 (633 aa).

Transmembrane regions (helical) follow at residues 18-38 (FLAM…TSPL), 61-81 (LISL…VLFL), 109-129 (LMFM…MITP), 145-165 (PAFH…LFAV), 173-193 (VSIF…AAGV), 211-231 (AVTF…AVFL), 255-275 (WFAV…ALVL), 287-307 (LMFP…ATII), 345-365 (IYLP…MFMF), 371-391 (LATA…VLAF), 405-425 (ATAV…ANLF), and 427-447 (IHDG…TMWT).

The protein belongs to the HAK/KUP transporter (TC 2.A.72) family.

The protein resides in the cell inner membrane. The enzyme catalyses K(+)(in) + H(+)(in) = K(+)(out) + H(+)(out). Functionally, transport of potassium into the cell. Likely operates as a K(+):H(+) symporter. This is Probable potassium transport system protein Kup 2 from Sinorhizobium medicae (strain WSM419) (Ensifer medicae).